The chain runs to 208 residues: Cytochrome c biogenesis ATP-binding export protein CcmA (208 aa).

An ABC transporter domain is found at 3 to 206 (LSGKDLTAYR…LEKFLPPQEK (204 aa)). 35 to 42 (GPNGIGKS) contributes to the ATP binding site.

Belongs to the ABC transporter superfamily. CcmA exporter (TC 3.A.1.107) family. The complex is composed of two ATP-binding proteins (CcmA) and two transmembrane proteins (CcmB).

Its subcellular location is the cell inner membrane. The catalysed reaction is heme b(in) + ATP + H2O = heme b(out) + ADP + phosphate + H(+). Functionally, part of the ABC transporter complex CcmAB involved in the biogenesis of c-type cytochromes; once thought to export heme, this seems not to be the case, but its exact role is uncertain. Responsible for energy coupling to the transport system. This chain is Cytochrome c biogenesis ATP-binding export protein CcmA, found in Bartonella henselae (strain ATCC 49882 / DSM 28221 / CCUG 30454 / Houston 1) (Rochalimaea henselae).